The primary structure comprises 283 residues: Protein BASIC PENTACYSTEINE1 (283 aa).

Positions 111–170 (RFEENPIPPPAPCEEQTGKKRKMRGSIATPTVPKAKKMRKPKEERDVTNNNVQQQQQRVK) are disordered. The span at 158–169 (TNNNVQQQQQRV) shows a compositional bias: low complexity.

This sequence belongs to the BBR/BPC family. Expressed in seedlings, leaves and pistils. Detected in the base of flowers and tips of carpels, in leaf and sepal vasculature, in young rosette, in the lateral and tip of primary roots, and in the whole ovule.

It localises to the nucleus. Functionally, transcriptional regulator that specifically binds to GA-rich elements (GAGA-repeats) present in regulatory sequences of genes involved in developmental processes. Negatively regulates the homeotic gene AGL11/STK, which controls ovule primordium identity, by a cooperative binding to purine-rich elements present in the regulatory sequence leading to DNA conformational changes. The protein is Protein BASIC PENTACYSTEINE1 (BPC1) of Arabidopsis thaliana (Mouse-ear cress).